The chain runs to 111 residues: Colicin-Ia immunity protein (111 aa).

A run of 2 helical transmembrane segments spans residues 33–53 (LLFWCISLCGMVLYPVAKWYI) and 85–105 (TGTVFILSLPLSMIYILSVII).

The protein localises to the cell membrane. Its function is as follows. This protein is able to protect a cell, which harbors the plasmid ColIa-CA53 encoding colicin Ia, against colicin Ia. The protein is Colicin-Ia immunity protein of Escherichia coli.